A 329-amino-acid polypeptide reads, in one-letter code: Protein-arginine N-acetylglucosaminyltransferase NleB1 (329 aa).

N-beta-linked (GlcNAc) arginine; by autocatalysis glycosylation occurs at Arg13. Position 48–50 (48–50 (QWF)) interacts with UDP-N-acetyl-alpha-D-glucosamine. Arg53 carries an N-beta-linked (GlcNAc) arginine; by autocatalysis glycan. Tyr72 serves as a coordination point for UDP-N-acetyl-alpha-D-glucosamine. An N-beta-linked (GlcNAc) arginine; by autocatalysis glycan is attached at Arg159. Position 219 to 222 (219 to 222 (YLDA)) interacts with UDP-N-acetyl-alpha-D-glucosamine. Residues 221-223 (DAD) carry the DXD motif motif. Mn(2+) is bound at residue Asp223. The active-site Proton acceptor is Glu253. Arg293 carries an N-beta-linked (GlcNAc) arginine; by autocatalysis glycan. Mn(2+) contacts are provided by Asn320 and Ser322. UDP-N-acetyl-alpha-D-glucosamine-binding positions include Ser322 and 327 to 329 (SSW).

Belongs to the glycosyltransferase NleB family. Requires Mn(2+) as cofactor. Post-translationally, auto-glycosylated: arginine GlcNAcylation is required for activity toward death domain-containing host target proteins.

The protein localises to the secreted. The protein resides in the host cytoplasm. The enzyme catalyses L-arginyl-[protein] + UDP-N-acetyl-alpha-D-glucosamine = N(omega)-(N-acetyl-beta-D-glucosaminyl)-L-arginyl-[protein] + UDP + H(+). Protein-arginine N-acetylglucosaminyltransferase effector that disrupts TNF signaling in infected cells, including NF-kappa-B signaling, apoptosis and necroptosis. Acts by catalyzing the transfer of a single N-acetylglucosamine (GlcNAc) to a conserved arginine residue in the death domain of host proteins FADD, TRADD, FAS, TNFRSF1A/TNFR1, TNFRSF25/DR3 and RIPK1: arginine GlcNAcylation prevents homotypic/heterotypic death domain interactions and assembly of the oligomeric TNF-alpha receptor complex, thereby disrupting TNF signaling. Has preference for host FADD as substrate compared to other death domain-containing proteins. Also acts on host proteins without a death domain: catalyzes arginine GlcNAcylation of HIF1A, thereby regulating host glucose metabolism. Also displays intra-bacterial activity by mediating GlcNAcylation of glutathione synthetase GshB. Catalyzes auto-GlcNAcylation, which is required for activity toward death domain-containing host target proteins. Shows a higher enzymatic activity than NleB2. This chain is Protein-arginine N-acetylglucosaminyltransferase NleB1, found in Escherichia coli O127:H6 (strain E2348/69 / EPEC).